Here is a 195-residue protein sequence, read N- to C-terminus: Obelin (195 aa).

Residues 1–6 (MASKYA) constitute a propeptide that is removed on maturation. EF-hand domains are found at residues 17–52 (KWIK…DICK), 53–88 (NLGA…FPEF), 110–145 (LIRE…SGIS), and 146–181 (PSEE…FWYT). Ca(2+)-binding residues include Asp-30, Asn-32, Asn-34, Gln-36, and Glu-41. Residues Asp-123, Asp-125, Ser-127, Thr-129, Glu-134, Asp-159, Asp-161, Ser-163, Glu-165, and Glu-170 each contribute to the Ca(2+) site.

It belongs to the aequorin family.

Ca(2+)-dependent bioluminescence photoprotein. Displays an emission peak at 495 nm (blue light). Trace amounts of calcium ion trigger the intramolecular oxidation of the chromophore, coelenterazine into coelenteramide and CO(2) with the concomitant emission of light. This chain is Obelin, found in Obelia geniculata (Knotted thread hydroid).